We begin with the raw amino-acid sequence, 510 residues long: Membrane-bound transcription factor site-2 protease (510 aa).

At M1 to P3 the chain is on the cytoplasmic side. The chain crosses the membrane as a helical span at residues V4–L24. The Lumenal segment spans residues K25–Q74. A run of 2 helical transmembrane segments spans residues W75–G95 and K96–A107. At D108 to Q135 the chain is on the lumenal side. Residues V136–V160 form a helical membrane-spanning segment. H162 lines the Zn(2+) pocket. E163 is a catalytic residue. 3 helical membrane-spanning segments follow: residues G165–F177, N178–L200, and F220–Y242. H166 contacts Zn(2+). Residues T243–K437 lie on the Lumenal side of the membrane. The N-linked (GlcNAc...) asparagine glycan is linked to N328. 2 helical membrane passes run Y438 to F455 and A456 to L467. Residues D468–L483 are Lumenal-facing. The helical transmembrane segment at I484–L504 threads the bilayer. At W505–R510 the chain is on the cytoplasmic side.

Belongs to the peptidase M50A family. It depends on Zn(2+) as a cofactor.

It localises to the membrane. The protein localises to the cytoplasm. It is found in the golgi apparatus membrane. It carries out the reaction Cleaves several transcription factors that are type-2 transmembrane proteins within membrane-spanning domains. Known substrates include sterol regulatory element-binding protein (SREBP) -1, SREBP-2 and forms of the transcriptional activator ATF6. SREBP-2 is cleaved at the site 477-DRSRILL-|-CVLTFLCLSFNPLTSLLQWGGA-505. The residues Asn-Pro, 11 residues distal to the site of cleavage in the membrane-spanning domain, are important for cleavage by S2P endopeptidase. Replacement of either of these residues does not prevent cleavage, but there is no cleavage if both of these residues are replaced.. Zinc metalloprotease that mediates intramembrane proteolysis of proteins such as ATF6, ATF6B, SREBF1/SREBP1 and SREBF2/SREBP2. Catalyzes the second step in the proteolytic activation of the sterol regulatory element-binding proteins (SREBPs) SREBF1/SREBP1 and SREBF2/SREBP2: cleaves SREBPs within the first transmembrane segment, thereby releasing the N-terminal segment with a portion of the transmembrane segment attached. Mature N-terminal SREBP fragments shuttle to the nucleus and activate gene transcription. Also mediates the second step in the proteolytic activation of the cyclic AMP-dependent transcription factor ATF-6 (ATF6 and ATF6B). Involved in intramembrane proteolysis during bone formation. In astrocytes and osteoblasts, upon DNA damage and ER stress, mediates the second step of the regulated intramembrane proteolytic activation of the transcription factor CREB3L1, leading to the inhibition of cell-cycle progression. The polypeptide is Membrane-bound transcription factor site-2 protease (MBTPS2) (Cricetulus griseus (Chinese hamster)).